The chain runs to 248 residues: MYKLVLIRHGESVWNQENRFTGWQDVDLSEKGRAEALKGGKALREKGFSFDVAYTSVLKRAIKTLNFVLDEVDQVWLPVHKDWRLNERHYGALQGLNKAETAARHGEEQVKIWRRSYDTPPPPMEVSDPRHPSHDPRYKNVDAQLLPSNESLKDTVARFLPLWDGTIAPAVKSGKNVLIVAHGNSLRALMQHLEGMTPDEIMGVNMPTGIPMMYELDANLKVLKKEFIGDPDEVKAAIEAVANQGKAK.

Substrate is bound by residues 8–15 (RHGESVWN), 21–22 (TG), arginine 60, 87–90 (ERHY), lysine 98, and 114–115 (RR). Histidine 9 functions as the Tele-phosphohistidine intermediate in the catalytic mechanism. The Proton donor/acceptor role is filled by glutamate 87. Residues 116 to 135 (SYDTPPPPMEVSDPRHPSHD) are disordered. 183–184 (GN) is a binding site for substrate.

The protein belongs to the phosphoglycerate mutase family. BPG-dependent PGAM subfamily. In terms of assembly, homodimer.

It catalyses the reaction (2R)-2-phosphoglycerate = (2R)-3-phosphoglycerate. The protein operates within carbohydrate degradation; glycolysis; pyruvate from D-glyceraldehyde 3-phosphate: step 3/5. In terms of biological role, catalyzes the interconversion of 2-phosphoglycerate and 3-phosphoglycerate. The sequence is that of 2,3-bisphosphoglycerate-dependent phosphoglycerate mutase from Bdellovibrio bacteriovorus (strain ATCC 15356 / DSM 50701 / NCIMB 9529 / HD100).